The sequence spans 251 residues: Dehydration-responsive element-binding protein 1I (251 aa).

The disordered stretch occupies residues 1–50; it reads MCTSKLEEITGEWPPPALQAASTTSSSEPCRRLSPPSSKRPAGRTKFHET. Positions 54 to 114 form a DNA-binding region, AP2/ERF; that stretch reads VFRGVRRRGR…GRAAACLNFA (61 aa). Residues 169-198 are disordered; the sequence is ATSEPSAASDDDAVTSSSSTTDADEEASPF.

The protein belongs to the AP2/ERF transcription factor family. ERF subfamily.

The protein localises to the nucleus. Functionally, transcriptional activator that binds specifically to the DNA sequence 5'-[AG]CCGAC-3'. Binding to the C-repeat/DRE element mediates high salinity- and dehydration-inducible transcription. The protein is Dehydration-responsive element-binding protein 1I (DREB1I) of Oryza sativa subsp. japonica (Rice).